Reading from the N-terminus, the 577-residue chain is Multidrug transporter TPO1_2 (577 aa).

The interval 1-63 is disordered; it reads MSSTSSDRPY…ALSKNSTQTS (63 aa). Residues Asn44 and Asn58 are each glycosylated (N-linked (GlcNAc...) asparagine). The next 12 membrane-spanning stretches (helical) occupy residues 137–157, 167–187, 204–224, 234–254, 263–283, 293–313, 368–388, 406–426, 446–466, 475–495, 504–526, and 541–561; these read VMLC…SSIF, IYHV…LGFA, GVLV…ATAK, FFAG…FADM, AICL…VIGS, WLEY…LFFF, PLLL…YLLL, ELPY…IWWM, LLPM…FCWT, WIVP…IFLP, YLLI…GAAF, and YAGL…LLFL.

Belongs to the major facilitator superfamily. DHA1 family. Polyamines/proton antiporter (TC 2.A.1.2.16) subfamily.

It is found in the cell membrane. Its function is as follows. Multidrug resistance transporter involved in resistance to azole antifungal drugs such as the imidazoles miconazole, ketoconazole, and tioconazole; as well as the triazoles itraconazole and fluconazole. Also plays a role in the resistance to other antifungal drug families such as the polyene amphotericin B, the pyrimide analog flucytosine, the fungicide mancozeb, and the polyamine spermine. Decreases the intracellular accumulation of clotrimazole by mediating its extrusion from cells. Plays a role in biofilm formation. This chain is Multidrug transporter TPO1_2, found in Candida glabrata (strain ATCC 2001 / BCRC 20586 / JCM 3761 / NBRC 0622 / NRRL Y-65 / CBS 138) (Yeast).